The sequence spans 1384 residues: CHD3-type chromatin-remodeling factor PICKLE (1384 aa).

The residue at position 23 (Ser23) is a Phosphoserine. The PHD-type zinc finger occupies 49–96 (ENACQACGESTNLVSCNTCTYAFHAKCLVPPLKDASVENWRCPECVSP). Chromo domains follow at residues 98 to 180 (NEID…NSED) and 190 to 249 (TTVD…RSKD). A Helicase ATP-binding domain is found at 285-471 (RFSWSKQTHV…FMLMHFLDAG (187 aa)). 298–305 (DEMGLGKT) provides a ligand contact to ATP. The Nuclear localization signal motif lies at 376–383 (KKKKSGQI). A DEAH box motif is present at residues 422–425 (DEGH). A Helicase C-terminal domain is found at 599 to 760 (LLDKMMVKLK…NINQEELDDI (162 aa)). Acidic residues predominate over residues 893–912 (AGLEDVSSDGDESYEAESTD). Disordered stretches follow at residues 893–941 (AGLE…TPLM), 1122–1152 (GLQG…NNNA), 1313–1344 (SDQS…PLRG), and 1365–1384 (VDVK…MVVD). Positions 1138 to 1152 (TNQNPGSVITGNNNA) are enriched in polar residues. Basic and acidic residues-rich tracts occupy residues 1316–1341 (SKSH…ETKP) and 1367–1384 (VKME…MVVD).

This sequence belongs to the SNF2/RAD54 helicase family. As to quaternary structure, interacts with TAF12B. In terms of tissue distribution, mostly expressed in tissue undergoing significant differentiation (meristems and primordia) such as young seedlings, influorescent tissue and young siliques, but not in endosperm and seed coat (at protein level). Levels decrease as organs age. Also present in trichomes.

The protein resides in the nucleus. Functionally, chromatin remodeling factor that represses the expression of embryonic trait genes (such as NFYB9/LEC1) upon and after seed germination and thus enables the developmental switch to post-germinative growth. Silences some MADS-box proteins such as PHE1 and PHE2. Plays a role during carpel differentiation. Regulates late processes in cytokinin signaling. This chain is CHD3-type chromatin-remodeling factor PICKLE (PKL), found in Arabidopsis thaliana (Mouse-ear cress).